A 1324-amino-acid chain; its full sequence is Structural maintenance of chromosomes protein 4 (1324 aa).

Residues 1 to 24 form a disordered region; the sequence is MSDKGIFRTSSTPSIVDVTPDRGE. Threonine 19 bears the Phosphothreonine; by CDC2 mark. 155-162 contributes to the ATP binding site; it reads GPNGSGKS. Coiled-coil stretches lie at residues 310–337 and 370–628; these read QELS…AKLE and NKKT…KASL. An SMC hinge domain is found at 651 to 764; that stretch reads NGFFGRLGDL…KNLEQANRIA (114 aa). Coiled-coil stretches lie at residues 825-1077 and 1297-1324; these read YRQH…MSNL and LSSR…ILTD.

Belongs to the SMC family. SMC4 subfamily. As to quaternary structure, forms a heterodimer with cut14/smc2. Component of the condensin complex, which contains the smc2 and smc4 heterodimer, and three non smc subunits that probably regulate the complex: cnd1, cnd2 and cnd3. Interacts with C1739.07. Phosphorylated by CDC2 on Thr-19 at metaphase.

The protein resides in the nucleus. The protein localises to the cytoplasm. It is found in the chromosome. Its function is as follows. Central component of the condensin complex, a complex required for conversion of interphase chromatin into mitotic-like condense chromosomes. The condensin complex probably introduces positive supercoils into relaxed DNA in the presence of type I topoisomerases and converts nicked DNA into positive knotted forms in the presence of type II topoisomerases. This Schizosaccharomyces pombe (strain 972 / ATCC 24843) (Fission yeast) protein is Structural maintenance of chromosomes protein 4 (cut3).